Here is a 197-residue protein sequence, read N- to C-terminus: MKFKNKGLIIILSSPSGTGKSSLAKELLKIDNNLRLSISVTTRKPRLGEVDGINYYFKSDREFKTLVKQNKFLEYAKIYNDYYGTPKEYVKMLLKQGFDVLFDIDWQGVRSIKKNTNNVITIFILPPSIEILEQRLRNRATDNEETIKLRMQSAQNEISHANEYDYVVINDDFSQTLKKIHEIIVAERAKNFAYHEY.

Residues 7–185 form the Guanylate kinase-like domain; the sequence is GLIIILSSPS…TLKKIHEIIV (179 aa). An ATP-binding site is contributed by 14–21; the sequence is SPSGTGKS.

This sequence belongs to the guanylate kinase family.

The protein localises to the cytoplasm. It catalyses the reaction GMP + ATP = GDP + ADP. Functionally, essential for recycling GMP and indirectly, cGMP. This chain is Guanylate kinase (gmk), found in Rickettsia prowazekii (strain Madrid E).